Reading from the N-terminus, the 170-residue chain is Putative phosphoesterase OB1230 (170 aa).

The active-site Proton donor is histidine 34. 2 short sequence motifs (HXTX) span residues 34–37 (HLTL) and 115–118 (HITI). Histidine 115 serves as the catalytic Proton acceptor.

It belongs to the 2H phosphoesterase superfamily. YjcG family.

This is Putative phosphoesterase OB1230 from Oceanobacillus iheyensis (strain DSM 14371 / CIP 107618 / JCM 11309 / KCTC 3954 / HTE831).